Here is a 356-residue protein sequence, read N- to C-terminus: Malate dehydrogenase, glyoxysomal (356 aa).

The transit peptide at 1–36 (MQPIPDVNQRIARISAHLHPPKSQMEESSALRRANC) directs the protein to the glyoxysome. NAD(+)-binding positions include 51-57 (GAAGGIG) and D77. Substrate contacts are provided by R124 and R130. NAD(+)-binding positions include N137 and 160–162 (ISN). Substrate contacts are provided by N162 and R196. Residue H220 is the Proton acceptor of the active site. An NAD(+)-binding site is contributed by M271.

This sequence belongs to the LDH/MDH superfamily. MDH type 1 family. In terms of assembly, homodimer.

It is found in the glyoxysome. The enzyme catalyses (S)-malate + NAD(+) = oxaloacetate + NADH + H(+). This chain is Malate dehydrogenase, glyoxysomal, found in Citrullus lanatus (Watermelon).